Reading from the N-terminus, the 614-residue chain is MAHTSVASLVVVLIVAFLTPILLHRFKLSIPVVVAEIIMGLIIGKSGLNLVVEGDTWLQTLSMLGFIFLMFLSGLEIDFSSFEKGKKKQFLPNGKEAPNTFAAASVIFVGIFILSLLLSYGFVLAGFIQNAFLMTLIISTISLGVVVPTLKEERIMNSNIGQIILLVAVIADLATMILLAVFSSLYGEDSGNMWLLMILFAAGVVLYFFGRVFKHRSFVQSMSKGTIQIGTRAIFTLIIVLVALSESLGAENILGAFLAGVLVSLLSPNKELVQQLDSFGYGFLIPIFFVMVGVKLDIWTLFQDKTILIMIPLLLLALLVSKIIPVMYLKKWYDNRTIFASGFLLTSTLSLVIAAATIGQQLHVISTNMSGALILVAVIASIFTPICFKKLYKREEQPEEKKTITFIGANQMTLPVTLELPEEEYDVRVVHVYQENAEEKLSESVFAVETISDYEHETLESLGIFETDILVVATGNEDMNADIALLAKDKGTERVIASVGSPEHEAALKEQGISIFSILLSTKTLLRALIEAPGVMKLLTNQESSLYQINMENSKYDGVILREFPLTGDVIFVRIFRGVDSIVPHGDTRLKLGDRLIVTGSRGYVTDLKKTLEG.

A run of 13 helical transmembrane segments spans residues histidine 3–leucine 23, valine 32–valine 52, tryptophan 57–isoleucine 77, isoleucine 107–phenylalanine 127, asparagine 130–leucine 150, isoleucine 163–serine 183, methionine 193–phenylalanine 213, glycine 225–leucine 244, leucine 248–serine 267, glycine 282–phenylalanine 302, isoleucine 307–methionine 327, isoleucine 338–isoleucine 358, and asparagine 368–phenylalanine 388. The 119-residue stretch at lysine 401–leucine 519 folds into the RCK N-terminal domain. Residues proline 533–glycine 614 form the RCK C-terminal domain.

Belongs to the monovalent cation:proton antiporter 2 (CPA2) transporter (TC 2.A.37) family.

It is found in the cell membrane. With respect to regulation, binds cyclic di-AMP (c-di-AMP), which may regulate the transporter activity. Probable Na(+)/H(+) antiporter. In Bacillus subtilis (strain 168), this protein is Putative Na(+)/H(+) antiporter YjbQ.